A 120-amino-acid polypeptide reads, in one-letter code: UPF0102 protein FRAAL5785 (120 aa).

This sequence belongs to the UPF0102 family.

This chain is UPF0102 protein FRAAL5785, found in Frankia alni (strain DSM 45986 / CECT 9034 / ACN14a).